The primary structure comprises 267 residues: MRILVEIAYQGNNFLGFQIQQNGRTVQQQFEKLLQRMHKRHVRIHPSSRTDRGVHAIQQYFHFDTELNIPMSQWQYAMNRTLPDDIYVNNVVTVDDDFHCRYDCVGKRYRYKVYQAQHRDPFQSGLKTFIPETLDLGKMNRAAQQFIGTHDFTGFCSQKTEVESKVRTLYQSEIVKTDDGFDYIVTGSGFLYNMVRVLVAFLIEVGKGRHEVSDVPKLLESKNRKNVPFTAPAEGLYLEKIYLDENELLKDFGNDIKIHRKKSLQND.

The active-site Nucleophile is Asp51. Tyr109 is a binding site for substrate.

This sequence belongs to the tRNA pseudouridine synthase TruA family. In terms of assembly, homodimer.

The enzyme catalyses uridine(38/39/40) in tRNA = pseudouridine(38/39/40) in tRNA. Its function is as follows. Formation of pseudouridine at positions 38, 39 and 40 in the anticodon stem and loop of transfer RNAs. The sequence is that of tRNA pseudouridine synthase A from Staphylococcus aureus (strain USA300).